We begin with the raw amino-acid sequence, 1218 residues long: Protein jagged-1 (1218 aa).

The N-terminal stretch at 1-33 (MRSPRTRGRSGRPLSLLLALLCALRAKVCGASG) is a signal peptide. Residues 34-1067 (QFELEILSMQ…QRRPLKNRTD (1034 aa)) are Extracellular-facing. A glycan (N-linked (GlcNAc...) asparagine) is linked at N143. Residues 185–229 (VTCDDYYYGFGCNKFCRPRDDFFGHYACDQNGNKTCMEGWMGPEC) form the DSL domain. Intrachain disulfides connect C187/C196 and C200/C212. The interval 199–207 (FCRPRDDFF) is important for interaction with NOTCH1. N-linked (GlcNAc...) asparagine glycosylation occurs at N217. Intrachain disulfides connect C220-C229, C234-C245, C238-C251, C253-C262, C265-C276, C271-C282, C284-C293, C300-C312, C306-C322, C324-C333, C340-C351, C345-C360, C362-C371, C378-C389, C383-C398, C400-C409, C416-C427, C421-C436, C438-C447, C454-C464, C458-C473, C475-C484, C491-C502, C496-C511, C513-C522, C529-C540, C534-C549, C551-C560, C578-C605, C599-C615, C617-C626, C633-C644, C638-C653, C655-C664, C671-C682, C676-C691, C693-C702, C709-C720, C714-C729, and C731-C740. One can recognise an EGF-like 1 domain in the interval 230–263 (NRAICRQGCSPKHGSCKLPGDCRCQYGWQGLYCD). In terms of domain architecture, EGF-like 2; atypical spans 264–294 (KCIPHPGCVHGICNEPWQCLCETNWGGQLCD). EGF-like domains are found at residues 296-334 (DLNY…PNCE) and 336-372 (AEHA…PTCS). Residues 374–410 (NIDDCSPNNCSHGGTCQDLVNGFKCVCPPQWTGKTCQ) form the EGF-like 5; calcium-binding domain. Residue N382 is glycosylated (N-linked (GlcNAc...) asparagine). In terms of domain architecture, EGF-like 6; calcium-binding spans 412–448 (DANECEAKPCVNAKSCKNLIASYYCDCLPGWMGQNCD). In terms of domain architecture, EGF-like 7; calcium-binding spans 450–485 (NINDCLGQCQNDASCRDLVNGYRCICPPGYAGDHCE). The EGF-like 8; calcium-binding domain occupies 487-523 (DIDECASNPCLNGGHCQNEINRFQCLCPTGFSGNLCQ). EGF-like domains follow at residues 525–561 (DIDY…KNCS) and 586–627 (DTPE…TYCH). An N-linked (GlcNAc...) asparagine glycan is attached at N559. The EGF-like 11; calcium-binding domain occupies 629-665 (NINDCESNPCRNGGTCIDGVNSYKCICSDGWEGAYCE). Positions 667–703 (NINDCSQNPCHNGGTCRDLVNDFYCDCKNGWKGKTCH) constitute an EGF-like 12; calcium-binding domain. EGF-like domains follow at residues 705 to 741 (RDSQ…TTCN) and 744 to 780 (RNSS…PICA). N745 is a glycosylation site (N-linked (GlcNAc...) asparagine). 9 cysteine pairs are disulfide-bonded: C748–C759, C753–C768, C770–C779, C786–C797, C791–C806, C808–C817, C824–C835, C829–C844, and C846–C855. An EGF-like 15; calcium-binding domain is found at 782–818 (NTNDCSPHPCYNSGTCVDGDNWYRCECAPGFAGPDCR). The 37-residue stretch at 820-856 (NINECQSSPCAFGATCVDEINGYRCVCPPGHSGAKCQ) folds into the EGF-like 16; calcium-binding domain. 4 N-linked (GlcNAc...) asparagine glycosylation sites follow: N960, N991, N1045, and N1064. The chain crosses the membrane as a helical span at residues 1068–1093 (FLVPLLSSVLTVAWICCLVTAFYWCL). Topologically, residues 1094-1218 (RKRRKPGSHT…QSLNRMEYIV (125 aa)) are cytoplasmic. The segment at 1152 to 1218 (HNSEVEEDDM…QSLNRMEYIV (67 aa)) is disordered. Polar residues predominate over residues 1189–1199 (TPTKHPNWTNK).

As to quaternary structure, interacts with NOTCH2 and NOTCH3. Interacts with NOTCH1 (in the presence of calcium ions). Widely expressed in adult and fetal tissues. In cervix epithelium expressed in undifferentiated subcolumnar reserve cells and squamous metaplasia. Expression is up-regulated in cervical squamous cell carcinoma. Expressed in bone marrow cell line HS-27a which supports the long-term maintenance of immature progenitor cells.

It is found in the membrane. It localises to the cell membrane. Its function is as follows. Ligand for multiple Notch receptors and involved in the mediation of Notch signaling. May be involved in cell-fate decisions during hematopoiesis. Seems to be involved in early and late stages of mammalian cardiovascular development. Inhibits myoblast differentiation. Enhances fibroblast growth factor-induced angiogenesis (in vitro). This chain is Protein jagged-1 (JAG1), found in Homo sapiens (Human).